The primary structure comprises 209 residues: ATP-dependent Clp protease proteolytic subunit (209 aa).

Residue serine 101 is the Nucleophile of the active site. Residue histidine 126 is part of the active site.

Belongs to the peptidase S14 family. In terms of assembly, component of the chloroplastic Clp protease core complex.

The protein localises to the plastid. It is found in the chloroplast stroma. The catalysed reaction is Hydrolysis of proteins to small peptides in the presence of ATP and magnesium. alpha-casein is the usual test substrate. In the absence of ATP, only oligopeptides shorter than five residues are hydrolyzed (such as succinyl-Leu-Tyr-|-NHMec, and Leu-Tyr-Leu-|-Tyr-Trp, in which cleavage of the -Tyr-|-Leu- and -Tyr-|-Trp bonds also occurs).. Cleaves peptides in various proteins in a process that requires ATP hydrolysis. Has a chymotrypsin-like activity. Plays a major role in the degradation of misfolded proteins. This chain is ATP-dependent Clp protease proteolytic subunit, found in Huperzia lucidula (Shining clubmoss).